A 268-amino-acid polypeptide reads, in one-letter code: Putative hydro-lyase ABAYE2440 (268 aa).

The protein belongs to the D-glutamate cyclase family.

This Acinetobacter baumannii (strain AYE) protein is Putative hydro-lyase ABAYE2440.